A 272-amino-acid chain; its full sequence is NAD kinase (272 aa).

Catalysis depends on D50, which acts as the Proton acceptor. Residues 50–51 (DG), 126–127 (NE), R152, D154, 165–170 (TAYNKS), and A189 contribute to the NAD(+) site.

This sequence belongs to the NAD kinase family. The cofactor is a divalent metal cation.

The protein resides in the cytoplasm. The enzyme catalyses NAD(+) + ATP = ADP + NADP(+) + H(+). In terms of biological role, involved in the regulation of the intracellular balance of NAD and NADP, and is a key enzyme in the biosynthesis of NADP. Catalyzes specifically the phosphorylation on 2'-hydroxyl of the adenosine moiety of NAD to yield NADP. This chain is NAD kinase, found in Streptococcus pneumoniae (strain 70585).